The sequence spans 269 residues: Ribosomal RNA small subunit methyltransferase J (269 aa).

S-adenosyl-L-methionine contacts are provided by residues 124–125 and Asp188; that span reads ER.

This sequence belongs to the methyltransferase superfamily. RsmJ family.

It is found in the cytoplasm. It carries out the reaction guanosine(1516) in 16S rRNA + S-adenosyl-L-methionine = N(2)-methylguanosine(1516) in 16S rRNA + S-adenosyl-L-homocysteine + H(+). In terms of biological role, specifically methylates the guanosine in position 1516 of 16S rRNA. The sequence is that of Ribosomal RNA small subunit methyltransferase J from Saccharophagus degradans (strain 2-40 / ATCC 43961 / DSM 17024).